The sequence spans 255 residues: 5'-nucleotidase SurE (255 aa).

The a divalent metal cation site is built by D8, D9, S40, and N93.

Belongs to the SurE nucleotidase family. Requires a divalent metal cation as cofactor.

Its subcellular location is the cytoplasm. The enzyme catalyses a ribonucleoside 5'-phosphate + H2O = a ribonucleoside + phosphate. In terms of biological role, nucleotidase that shows phosphatase activity on nucleoside 5'-monophosphates. The protein is 5'-nucleotidase SurE of Rhodopseudomonas palustris (strain ATCC BAA-98 / CGA009).